The following is a 501-amino-acid chain: Probable pectate lyase 13 (501 aa).

A signal peptide spans 1 to 22 (MLLQNFSNTIFLLCLFFTLLSA). N-linked (GlcNAc...) asparagine glycosylation is found at Asn-27 and Asn-49. Residues 55–78 (RQLSSPSSSSSSSSSSSSSSCRTG) form a disordered region. The segment covering 58–74 (SSPSSSSSSSSSSSSSS) has biased composition (low complexity). Residues Asp-217, Asp-241, and Asp-245 each coordinate Ca(2+). Residue Arg-297 is part of the active site. 2 disordered regions span residues 329 to 359 (INSQ…DGEW) and 408 to 463 (NAGV…SSGD). Residues 343–357 (SAKEVTKRVDSKDDG) are compositionally biased toward basic and acidic residues. Residues 430–449 (GGDGGGGGSSGGSSGGGMDV) show a composition bias toward gly residues. Residues 450-463 (MGGTTRGSSSSSGD) are compositionally biased toward low complexity. A lipid anchor (GPI-anchor amidated serine) is attached at Ser-474. A propeptide spans 475–501 (DAPSRPRLTLLFSLLMISVLSLSTLLL) (removed in mature form).

Belongs to the polysaccharide lyase 1 family. Requires Ca(2+) as cofactor. Expressed equally in mature leaves, buds, flowers, rosettes and roots.

Its subcellular location is the cell membrane. The enzyme catalyses Eliminative cleavage of (1-&gt;4)-alpha-D-galacturonan to give oligosaccharides with 4-deoxy-alpha-D-galact-4-enuronosyl groups at their non-reducing ends.. The protein operates within glycan metabolism; pectin degradation; 2-dehydro-3-deoxy-D-gluconate from pectin: step 2/5. Susceptibility factor required for infection by most powdery mildews, but not by unrelated pathogens. Exact function not known, but clearly affects cell wall composition. The sequence is that of Probable pectate lyase 13 (PMR6) from Arabidopsis thaliana (Mouse-ear cress).